Reading from the N-terminus, the 179-residue chain is Mediator of RNA polymerase II transcription subunit 28 (179 aa).

The interval 1–43 (MASSMCGMFPGQQPPGSLPPPGPGGPGQPGLLTGTPGNRGANN) is disordered. Residues 12 to 26 (QQPPGSLPPPGPGGP) are compositionally biased toward pro residues. The stretch at 109 to 139 (EQVEKEDASELKNELQRKEMLIQKHLAKIHH) forms a coiled coil.

It belongs to the Mediator complex subunit 28 family. In terms of assembly, component of the Mediator complex.

The protein resides in the nucleus. Functionally, component of the Mediator complex, a coactivator involved in the regulated transcription of nearly all RNA polymerase II-dependent genes. Mediator functions as a bridge to convey information from gene-specific regulatory proteins to the basal RNA polymerase II transcription machinery. Mediator is recruited to promoters by direct interactions with regulatory proteins and serves as a scaffold for the assembly of a functional preinitiation complex with RNA polymerase II and the general transcription factors. In Danio rerio (Zebrafish), this protein is Mediator of RNA polymerase II transcription subunit 28 (med28).